Consider the following 452-residue polypeptide: Isocitrate dehydrogenase [NADP], mitochondrial (452 aa).

The N-terminal 39 residues, 1 to 39 (MAGYLRAVSSLCRASGSARTWAPAALTVPSWPEQPRRHY), are a transit peptide targeting the mitochondrion. 4 positions are modified to N6-acetyllysine: Lys-45, Lys-48, Lys-67, and Lys-69. An N6-acetyllysine; alternate mark is found at Lys-80 and Lys-106. 2 positions are modified to N6-succinyllysine; alternate: Lys-80 and Lys-106. Residues 115 to 117 (TIT) and Arg-122 contribute to the NADP(+) site. Thr-117 provides a ligand contact to D-threo-isocitrate. D-threo-isocitrate contacts are provided by residues 134–140 (SPNGTIR) and Arg-149. Lys-155 carries the post-translational modification N6-acetyllysine. Lys-166 is modified (N6-acetyllysine; alternate). Lys-166 carries the N6-succinyllysine; alternate modification. Arg-172 contacts D-threo-isocitrate. An N6-acetyllysine; alternate mark is found at Lys-180 and Lys-193. 2 positions are modified to N6-succinyllysine; alternate: Lys-180 and Lys-193. Lys-199 is subject to N6-acetyllysine. Lys-256 is subject to N6-acetyllysine; alternate. Lys-256 is modified (N6-succinyllysine; alternate). N6-acetyllysine is present on residues Lys-263, Lys-272, Lys-275, and Lys-280. Lys-282 is modified (N6-acetyllysine; alternate). An N6-succinyllysine; alternate modification is found at Lys-282. Asp-291 contacts Mn(2+). Lys-299 lines the NADP(+) pocket. Residue Asp-314 participates in Mn(2+) binding. Residues 349 to 354 (GTVTRH) and Asn-367 contribute to the NADP(+) site. N6-acetyllysine; alternate is present on Lys-384. The residue at position 384 (Lys-384) is an N6-succinyllysine; alternate. An N6-acetyllysine mark is found at Lys-400, Lys-413, and Lys-442.

The protein belongs to the isocitrate and isopropylmalate dehydrogenases family. Homodimer. It depends on Mg(2+) as a cofactor. Mn(2+) is required as a cofactor. In terms of processing, acetylation at Lys-413 dramatically reduces catalytic activity. Deacetylated by SIRT3. In terms of tissue distribution, predominantly expressed in heart, liver and kidney. Expressed in activated B lymphocytes.

It is found in the mitochondrion. The enzyme catalyses D-threo-isocitrate + NADP(+) = 2-oxoglutarate + CO2 + NADPH. In terms of biological role, plays a role in intermediary metabolism and energy production. It may tightly associate or interact with the pyruvate dehydrogenase complex. This Mus musculus (Mouse) protein is Isocitrate dehydrogenase [NADP], mitochondrial (Idh2).